The sequence spans 286 residues: ATP synthase gamma chain (286 aa).

Belongs to the ATPase gamma chain family. As to quaternary structure, F-type ATPases have 2 components, CF(1) - the catalytic core - and CF(0) - the membrane proton channel. CF(1) has five subunits: alpha(3), beta(3), gamma(1), delta(1), epsilon(1). CF(0) has three main subunits: a, b and c.

The protein localises to the cell inner membrane. Produces ATP from ADP in the presence of a proton gradient across the membrane. The gamma chain is believed to be important in regulating ATPase activity and the flow of protons through the CF(0) complex. This is ATP synthase gamma chain from Pseudomonas savastanoi pv. phaseolicola (strain 1448A / Race 6) (Pseudomonas syringae pv. phaseolicola (strain 1448A / Race 6)).